A 984-amino-acid polypeptide reads, in one-letter code: Calsyntenin-1 (984 aa).

Residues 1–18 (MRTAYFIFVGALLGVSYA) form the signal peptide. Over 19–850 (KHHHAARAPI…VGQGAIAGGA (832 aa)) the chain is Extracellular. Cadherin domains follow at residues 66 to 142 (YLLT…APEI) and 143 to 257 (ENPW…APGV). 2 N-linked (GlcNAc...) asparagine glycosylation sites follow: Asn-206 and Asn-305. The chain crosses the membrane as a helical span at residues 851–871 (VAVVVVVCVGFLLVLLVIGVL). The Cytoplasmic segment spans residues 872-984 (KMRDTPMPRR…ISTNARSYRV (113 aa)). The tract at residues 878 to 959 (MPRRRRQKRQ…QTEVLPHLDA (82 aa)) is disordered. Over residues 886–896 (RQSDGGMHWDD) the composition is skewed to basic and acidic residues. Residues 918–951 (EFSDEEEEEETDGESECSYRDEEDDVSEDEEDQT) show a composition bias toward acidic residues.

The protein belongs to the calsyntenin family. Interacts with isoform c of daf-2 (daf-2c); promoting daf-2c localization to synaptic regions. Interacts with klc-2. Interacts with unc-104. Post-translationally, a proportion of the protein is proteolytically cleaved before the transmembrane domain in neurons, leading to release in the extracellular space. As to expression, widely expressed in the nervous system. Highly expressed in many head neurons, including most amphid sensory neurons. Also expressed in other tissues, such as intestine and gonadal sheath cells.

It localises to the golgi apparatus membrane. It is found in the perikaryon. The protein resides in the cell projection. Its subcellular location is the axon. The protein localises to the secreted. It localises to the synaptic cleft. Functionally, cell adhesion molecule involved in associative learning and memory. Acts as a regulator of GABAergic synaptic transmission at neuromuscular junctions by regulating GABA synaptic vesicle precursor transport: possibly functions as a cargo adapter for unc-104-mediated transport of synaptic vesicle precursors. Promotes localization of isoform c of daf-2 (daf-2c) to synaptic regions by acting as a signaling adapter between klc-2 and daf-2c. Its function is as follows. Acts as aregulator of glutamate signaling in the sensory neurons by inhibiting the activity of command interneurons, thereby negatively regulating motor circuit activity and locomotion. The chain is Calsyntenin-1 from Caenorhabditis elegans.